Consider the following 713-residue polypeptide: Phosphoribosylformylglycinamidine synthase subunit PurL (713 aa).

Over residues 1-17 (MSLSPSDRELVTEELGR) the composition is skewed to basic and acidic residues. The interval 1 to 20 (MSLSPSDRELVTEELGREPT) is disordered. Residue His34 is part of the active site. Tyr37 contributes to the ATP binding site. Glu85 contacts Mg(2+). Residues 86-89 (SHNH) and Arg108 each bind substrate. His87 (proton acceptor) is an active-site residue. A Mg(2+)-binding site is contributed by Asp109. Position 233 (Gln233) interacts with substrate. Asp261 serves as a coordination point for Mg(2+). 305 to 307 (ESQ) contacts substrate. ATP-binding residues include Asp480 and Gly517. A Mg(2+)-binding site is contributed by Asn518. Ser520 is a substrate binding site.

This sequence belongs to the FGAMS family. Monomer. Part of the FGAM synthase complex composed of 1 PurL, 1 PurQ and 2 PurS subunits.

It is found in the cytoplasm. It catalyses the reaction N(2)-formyl-N(1)-(5-phospho-beta-D-ribosyl)glycinamide + L-glutamine + ATP + H2O = 2-formamido-N(1)-(5-O-phospho-beta-D-ribosyl)acetamidine + L-glutamate + ADP + phosphate + H(+). Its pathway is purine metabolism; IMP biosynthesis via de novo pathway; 5-amino-1-(5-phospho-D-ribosyl)imidazole from N(2)-formyl-N(1)-(5-phospho-D-ribosyl)glycinamide: step 1/2. Functionally, part of the phosphoribosylformylglycinamidine synthase complex involved in the purines biosynthetic pathway. Catalyzes the ATP-dependent conversion of formylglycinamide ribonucleotide (FGAR) and glutamine to yield formylglycinamidine ribonucleotide (FGAM) and glutamate. The FGAM synthase complex is composed of three subunits. PurQ produces an ammonia molecule by converting glutamine to glutamate. PurL transfers the ammonia molecule to FGAR to form FGAM in an ATP-dependent manner. PurS interacts with PurQ and PurL and is thought to assist in the transfer of the ammonia molecule from PurQ to PurL. In Natronomonas pharaonis (strain ATCC 35678 / DSM 2160 / CIP 103997 / JCM 8858 / NBRC 14720 / NCIMB 2260 / Gabara) (Halobacterium pharaonis), this protein is Phosphoribosylformylglycinamidine synthase subunit PurL.